The following is an 836-amino-acid chain: Probable serine/threonine-protein kinase dyrk1 (836 aa).

Over residues 99–278 the composition is skewed to low complexity; sequence QQQYQQQHNN…SSNNNNNNKQ (180 aa). The segment at 99–286 is disordered; that stretch reads QQQYQQQHNN…KQSKYNDGYD (188 aa). The Protein kinase domain occupies 304–624; the sequence is FEIISSLGKG…PLEALQHSFF (321 aa). Residues 310-318 and Lys333 each bind ATP; that span reads LGKGSFGQV. Asp432 (proton acceptor) is an active-site residue. Disordered stretches follow at residues 627-697, 718-767, and 785-836; these read DETS…QQQQ, TYSP…INSN, and NIYN…NNNI. The span at 630-697 shows a compositional bias: low complexity; it reads SQPPQQQSQQ…QQLQQQQQQQ (68 aa). Positions 718-728 are enriched in polar residues; it reads TYSPTTQQSNH. Basic and acidic residues predominate over residues 729–744; sequence KLVDQMKKASMKDKSP. Positions 785–816 are enriched in low complexity; that stretch reads NIYNNNNNNNNNNNNNNNNNNSNNYNNSNELS.

This sequence belongs to the protein kinase superfamily. CMGC Ser/Thr protein kinase family. MNB/DYRK subfamily.

It carries out the reaction L-seryl-[protein] + ATP = O-phospho-L-seryl-[protein] + ADP + H(+). The enzyme catalyses L-threonyl-[protein] + ATP = O-phospho-L-threonyl-[protein] + ADP + H(+). The catalysed reaction is L-tyrosyl-[protein] + ATP = O-phospho-L-tyrosyl-[protein] + ADP + H(+). In Dictyostelium discoideum (Social amoeba), this protein is Probable serine/threonine-protein kinase dyrk1 (dyrk1).